We begin with the raw amino-acid sequence, 304 residues long: UDP-3-O-acyl-N-acetylglucosamine deacetylase (304 aa).

Zn(2+) is bound by residues H78, H235, and D239. Catalysis depends on H262, which acts as the Proton donor.

This sequence belongs to the LpxC family. Zn(2+) is required as a cofactor.

It carries out the reaction a UDP-3-O-[(3R)-3-hydroxyacyl]-N-acetyl-alpha-D-glucosamine + H2O = a UDP-3-O-[(3R)-3-hydroxyacyl]-alpha-D-glucosamine + acetate. The protein operates within glycolipid biosynthesis; lipid IV(A) biosynthesis; lipid IV(A) from (3R)-3-hydroxytetradecanoyl-[acyl-carrier-protein] and UDP-N-acetyl-alpha-D-glucosamine: step 2/6. In terms of biological role, catalyzes the hydrolysis of UDP-3-O-myristoyl-N-acetylglucosamine to form UDP-3-O-myristoylglucosamine and acetate, the committed step in lipid A biosynthesis. This chain is UDP-3-O-acyl-N-acetylglucosamine deacetylase, found in Anaeromyxobacter sp. (strain Fw109-5).